The chain runs to 78 residues: Large ribosomal subunit protein bL28 (78 aa).

It belongs to the bacterial ribosomal protein bL28 family.

The chain is Large ribosomal subunit protein bL28 from Leifsonia xyli subsp. xyli (strain CTCB07).